A 320-amino-acid chain; its full sequence is tRNA pseudouridine synthase B (320 aa).

Catalysis depends on Asp41, which acts as the Nucleophile. 2 disordered regions span residues 116-136 (PPQV…ARRG) and 259-284 (DQCQ…DPSA). The span at 125–136 (QGERAHARARRG) shows a compositional bias: basic and acidic residues. The segment covering 270–284 (SDQQESAPNQTDPSA) has biased composition (polar residues).

This sequence belongs to the pseudouridine synthase TruB family. Type 1 subfamily.

The enzyme catalyses uridine(55) in tRNA = pseudouridine(55) in tRNA. Responsible for synthesis of pseudouridine from uracil-55 in the psi GC loop of transfer RNAs. This chain is tRNA pseudouridine synthase B, found in Prochlorococcus marinus (strain MIT 9313).